Here is a 246-residue protein sequence, read N- to C-terminus: Eukaryotic translation initiation factor 6 (246 aa).

Phosphoserine; by CK1 occurs at positions 174 and 175.

Belongs to the eIF-6 family. Monomer. Associates with the 60S ribosomal subunit. Post-translationally, phosphorylation at Ser-174 and Ser-175 promotes nuclear export.

The protein resides in the cytoplasm. It is found in the nucleus. The protein localises to the nucleolus. Its function is as follows. Binds to the 60S ribosomal subunit and prevents its association with the 40S ribosomal subunit to form the 80S initiation complex in the cytoplasm. Is also involved in ribosome biogenesis. Associates with pre-60S subunits in the nucleus and is involved in its nuclear export. This Sordaria macrospora (strain ATCC MYA-333 / DSM 997 / K(L3346) / K-hell) protein is Eukaryotic translation initiation factor 6.